The chain runs to 217 residues: T-complex protein 10A homolog 1 (217 aa).

A disordered region spans residues 1-26 (MLAGQLEARDPKEGTHPEDPCPGAGA). Over residues 7 to 19 (EARDPKEGTHPED) the composition is skewed to basic and acidic residues. Positions 69 to 110 (ADVHGKLRSHIDALREQNMELREKLRALQLQRWKARKKSAAS) form a coiled coil. Positions 75–96 (LRSHIDALREQNMELREKLRAL) are leucine-zipper. The span at 175-192 (ERISSWKTPPQEKRDKSL) shows a compositional bias: basic and acidic residues. The tract at residues 175–217 (ERISSWKTPPQEKRDKSLSRRRQDRRATPTGRPTPCAERRGGV) is disordered.

Belongs to the TCP10 family. In terms of assembly, self-associates (via leucine zipper). Interacts (via leucine zipper) with ZIPK/DAPK3 (via leucine zipper). Interacts with MAD4.

The protein localises to the nucleus. May be involved in transcriptional regulation. Has in vitro transcription inhibition activity. The sequence is that of T-complex protein 10A homolog 1 (TCP10L) from Pan troglodytes (Chimpanzee).